The sequence spans 261 residues: (R)-S-adenosyl-L-methionine hydrolase (261 aa).

The adenosine site is built by Asp12, Asp72, and Asn187. The (R)-S-adenosyl-L-methionine site is built by Asn187, Ser231, and Val239. Val239 is an adenosine binding site.

Belongs to the SAM hydrolase / SAM-dependent halogenase family.

The catalysed reaction is (R)-S-adenosyl-L-methionine + H2O = adenosine + L-methionine + H(+). With respect to regulation, activity is inhibited by chloride. Functionally, catalyzes the hydrolysis of S-adenosyl-L-methionine (SAM) into adenosine and L-methionine. Is likely stereoselective, specifically hydrolyzing (R)-S-adenosyl-L-methionine ((R)-SAM), the inactive form of the ubiquitous cofactor SAM, and not the active form of SAM, (S)-S-adenosyl-L-methionine. Probaly plays a role in preventing accumulation of (R)-S-adenosyl-L-methionine in cells; maintenance of (S)-S-denosyl-L-methionine homochirality is important for cellular health given that the (R)-form is largely inactive as a methyl donor and can function as an inhibitor of methyltransferases. Shows very slow iodinase activity in vitro. This chain is (R)-S-adenosyl-L-methionine hydrolase, found in Salinispora arenicola (strain CNS-205).